The sequence spans 885 residues: Leucine--tRNA ligase (885 aa).

The short motif at 48-58 (PYPSGKLHMGH) is the 'HIGH' region element. The 'KMSKS' region signature appears at 639 to 643 (TMSKS). Residue Lys642 participates in ATP binding.

The protein belongs to the class-I aminoacyl-tRNA synthetase family.

It localises to the cytoplasm. The catalysed reaction is tRNA(Leu) + L-leucine + ATP = L-leucyl-tRNA(Leu) + AMP + diphosphate. This Bordetella parapertussis (strain 12822 / ATCC BAA-587 / NCTC 13253) protein is Leucine--tRNA ligase.